Reading from the N-terminus, the 293-residue chain is Elongation factor Ts (293 aa).

Positions 80 to 83 (TDFV) are involved in Mg(2+) ion dislocation from EF-Tu.

Belongs to the EF-Ts family.

The protein resides in the cytoplasm. Functionally, associates with the EF-Tu.GDP complex and induces the exchange of GDP to GTP. It remains bound to the aminoacyl-tRNA.EF-Tu.GTP complex up to the GTP hydrolysis stage on the ribosome. This Paraburkholderia phymatum (strain DSM 17167 / CIP 108236 / LMG 21445 / STM815) (Burkholderia phymatum) protein is Elongation factor Ts.